The sequence spans 438 residues: V-type ATP synthase beta chain (438 aa).

It belongs to the ATPase alpha/beta chains family.

Functionally, produces ATP from ADP in the presence of a proton gradient across the membrane. The V-type beta chain is a regulatory subunit. The polypeptide is V-type ATP synthase beta chain (atpB) (Chlamydia muridarum (strain MoPn / Nigg)).